The primary structure comprises 118 residues: UPF0251 protein TTE1845 (118 aa).

This sequence belongs to the UPF0251 family.

In Caldanaerobacter subterraneus subsp. tengcongensis (strain DSM 15242 / JCM 11007 / NBRC 100824 / MB4) (Thermoanaerobacter tengcongensis), this protein is UPF0251 protein TTE1845.